A 303-amino-acid chain; its full sequence is HTH-type transcriptional regulator YjiE (303 aa).

The region spanning 11 to 68 is the HTH lysR-type domain; sequence IETKWLYDFLTLEKCRNFSQAAVSRNVSQPAFSRRIRALEQAIGVELFNRQVTPLQLS. The H-T-H motif DNA-binding region spans 28-47; the sequence is FSQAAVSRNVSQPAFSRRIR.

Belongs to the LysR transcriptional regulatory family. As to quaternary structure, forms dimers, tetramers and possibly dodecameric complexes; oligomerization may be governed by cellular concentrations. DNA-binding seems to decrease oligomerization.

In terms of biological role, protects cells from HOCl (hypochlorite) stress but not peroxide or diamide stress. Decreases the intracellular load of reactive oxygen species by up-regulating genes involved in methionine and cysteine biosynthesis and down-regulating Fur-regulated genes involved in iron acquisition. Has also been suggested to down-regulate expression of the flagellar regulon, decreasing motility, but this activity was not confirmed in a second study. The chain is HTH-type transcriptional regulator YjiE (yjiE) from Escherichia coli (strain K12).